Reading from the N-terminus, the 266-residue chain is Ribosomal RNA small subunit methyltransferase A (266 aa).

S-adenosyl-L-methionine is bound by residues asparagine 11, leucine 13, glycine 37, glutamate 57, aspartate 85, and asparagine 104.

The protein belongs to the class I-like SAM-binding methyltransferase superfamily. rRNA adenine N(6)-methyltransferase family. RsmA subfamily.

It is found in the cytoplasm. It catalyses the reaction adenosine(1518)/adenosine(1519) in 16S rRNA + 4 S-adenosyl-L-methionine = N(6)-dimethyladenosine(1518)/N(6)-dimethyladenosine(1519) in 16S rRNA + 4 S-adenosyl-L-homocysteine + 4 H(+). Its function is as follows. Specifically dimethylates two adjacent adenosines (A1518 and A1519) in the loop of a conserved hairpin near the 3'-end of 16S rRNA in the 30S particle. May play a critical role in biogenesis of 30S subunits. The polypeptide is Ribosomal RNA small subunit methyltransferase A (Campylobacter jejuni (strain RM1221)).